The chain runs to 238 residues: Putative csd-like protein HI_1343 (238 aa).

Position 146 is an N6-(pyridoxal phosphate)lysine (Lys-146).

Belongs to the class-V pyridoxal-phosphate-dependent aminotransferase family. Csd subfamily.

In Haemophilus influenzae (strain ATCC 51907 / DSM 11121 / KW20 / Rd), this protein is Putative csd-like protein HI_1343.